Consider the following 472-residue polypeptide: Ribosomal protein uS12 methylthiotransferase RimO (472 aa).

The region spanning 33 to 143 is the MTTase N-terminal domain; that stretch reads NRIGFVSLGC…VLKHVHKYVP (111 aa). [4Fe-4S] cluster-binding residues include Cys42, Cys78, Cys107, Cys175, Cys179, and Cys182. Positions 161 to 398 constitute a Radical SAM core domain; it reads LTPKHYAYLK…MEVQAEISAE (238 aa). A TRAM domain is found at 401–467; the sequence is ARFVGRTLDI…EHDLWAEVVD (67 aa).

Belongs to the methylthiotransferase family. RimO subfamily. [4Fe-4S] cluster is required as a cofactor.

Its subcellular location is the cytoplasm. The catalysed reaction is L-aspartate(89)-[ribosomal protein uS12]-hydrogen + (sulfur carrier)-SH + AH2 + 2 S-adenosyl-L-methionine = 3-methylsulfanyl-L-aspartate(89)-[ribosomal protein uS12]-hydrogen + (sulfur carrier)-H + 5'-deoxyadenosine + L-methionine + A + S-adenosyl-L-homocysteine + 2 H(+). In terms of biological role, catalyzes the methylthiolation of an aspartic acid residue of ribosomal protein uS12. The polypeptide is Ribosomal protein uS12 methylthiotransferase RimO (Shewanella baltica (strain OS155 / ATCC BAA-1091)).